The primary structure comprises 349 residues: MGRVFKKKGGAKREAEEEKQEELVMRKKLRKEEEPEPVEDVEEDEDVSDEDDEDIDDEEEDEDEQNIMDFDFEAYPPSEDDRDGIVNMLTQTFLRTDIDLKAMSEGIIAKAPHGVVLTQAYDDEETEEDYMAYGLCTTVPLNDNKDDAPKFIKDLFTYVLNRAKKGAPTEIYKKIEEIQVSGDGKSALFVNERLLNFPTIVVPQIFGSIREDLSGFETKYKTIIYIQKLRIVETDGSEAKVGASSNGSSGVAGKKKGKMGKAEKKRAAAAALANAEIEFDNPEDRVLFEIKEGKEIHFDYPVHMDVEPGSKFHSTEKDGKKWNPFRRLVIMDDKRFDAFLKKGSDGIII.

Basic residues predominate over residues 1–10 (MGRVFKKKGG). A disordered region spans residues 1–65 (MGRVFKKKGG…DDEEEDEDEQ (65 aa)). Residues 11–33 (AKREAEEEKQEELVMRKKLRKEE) show a composition bias toward basic and acidic residues. The segment covering 34–65 (EPEPVEDVEEDEDVSDEDDEDIDDEEEDEDEQ) has biased composition (acidic residues).

It belongs to the BCP1 family.

This chain is Protein BCCIP homolog, found in Caenorhabditis elegans.